Consider the following 71-residue polypeptide: MSKDDLIQFTGTVLELLPNATFRVKLENDHVIIAHTSGRMRKNRIRILLGDKVMVEMTPYDLTKGRVIHRH.

Positions 1-71 constitute an S1-like domain; that stretch reads MSKDDLIQFT…LTKGRVIHRH (71 aa).

The protein belongs to the IF-1 family. Component of the 30S ribosomal translation pre-initiation complex which assembles on the 30S ribosome in the order IF-2 and IF-3, IF-1 and N-formylmethionyl-tRNA(fMet); mRNA recruitment can occur at any time during PIC assembly.

Its subcellular location is the cytoplasm. One of the essential components for the initiation of protein synthesis. Stabilizes the binding of IF-2 and IF-3 on the 30S subunit to which N-formylmethionyl-tRNA(fMet) subsequently binds. Helps modulate mRNA selection, yielding the 30S pre-initiation complex (PIC). Upon addition of the 50S ribosomal subunit IF-1, IF-2 and IF-3 are released leaving the mature 70S translation initiation complex. This Rickettsia conorii (strain ATCC VR-613 / Malish 7) protein is Translation initiation factor IF-1.